The primary structure comprises 275 residues: Tumor necrosis factor receptor superfamily member 14 (275 aa).

Positions 1 to 38 (MEPLPGWGSAPWSQAPTDNTFRLVPCVFLLNLLQRISA) are cleaved as a signal peptide. TNFR-Cys repeat units follow at residues 41 to 75 (SCRQ…GTVC), 77 to 119 (PCPP…DTVC), and 120 to 162 (RCIP…DTVC). 8 disulfide bridges follow: C42–C53, C54–C67, C57–C75, C78–C93, C96–C111, C99–C119, C121–C138, and C144–C162. N184 and N197 each carry an N-linked (GlcNAc...) asparagine glycan. A helical membrane pass occupies residues 211-231 (VVSILLPLVIVGAGIAGFLIC).

This sequence belongs to the tumor necrosis factor receptor superfamily. As to quaternary structure, interacts with TRAF2, TRAF3 and TRAF5. Interacts (via CRD1/TNFR-Cys 1) with CD160; this interaction is direct. Interacts (via CRD1/TNFR-Cys 1) with BTLA; this interaction is direct. In terms of processing, N-glycosylated. As to expression, expressed at mucosal sites including colon and pulmonary epithelial cells. Expressed in naive T cells.

It localises to the cell membrane. Its function is as follows. Receptor for four distinct ligands: The TNF superfamily members TNFSF14/LIGHT and homotrimeric LTA/lymphotoxin-alpha and the immunoglobulin superfamily members BTLA and CD160, altogether defining a complex stimulatory and inhibitory signaling network. Signals via the TRAF2-TRAF3 E3 ligase pathway to promote immune cell survival and differentiation. Participates in bidirectional cell-cell contact signaling between antigen presenting cells and lymphocytes. In response to ligation of TNFSF14/LIGHT, delivers costimulatory signals to T cells, promoting cell proliferation and effector functions. Interacts with CD160 on NK cells, enhancing IFNG production and anti-tumor immune response. In the context of bacterial infection, acts as a signaling receptor on epithelial cells for CD160 from intraepithelial lymphocytes, triggering the production of antimicrobial proteins and pro-inflammatory cytokines. Upon binding to CD160 on activated CD4+ T cells, down-regulates CD28 costimulatory signaling, restricting memory and alloantigen-specific immune response. May interact in cis (on the same cell) or in trans (on other cells) with BTLA. In cis interactions, appears to play an immune regulatory role inhibiting in trans interactions in naive T cells to maintain a resting state. In trans interactions, can predominate during adaptive immune response to provide survival signals to effector T cells. The polypeptide is Tumor necrosis factor receptor superfamily member 14 (Mus musculus (Mouse)).